A 243-amino-acid polypeptide reads, in one-letter code: NH(3)-dependent NAD(+) synthetase (243 aa).

Residue 31 to 38 coordinates ATP; that stretch reads GLSGGVDS. Asp37 provides a ligand contact to Mg(2+). Deamido-NAD(+) is bound at residue Arg116. Thr136 lines the ATP pocket. Mg(2+) is bound at residue Glu141. Lys149 and Asp156 together coordinate deamido-NAD(+). Lys165 and Ser187 together coordinate ATP. A deamido-NAD(+)-binding site is contributed by 233–234; that stretch reads HK.

The protein belongs to the NAD synthetase family. As to quaternary structure, homodimer.

The catalysed reaction is deamido-NAD(+) + NH4(+) + ATP = AMP + diphosphate + NAD(+) + H(+). It functions in the pathway cofactor biosynthesis; NAD(+) biosynthesis; NAD(+) from deamido-NAD(+) (ammonia route): step 1/1. In terms of biological role, catalyzes the ATP-dependent amidation of deamido-NAD to form NAD. Uses ammonia as a nitrogen source. The sequence is that of NH(3)-dependent NAD(+) synthetase from Carboxydothermus hydrogenoformans (strain ATCC BAA-161 / DSM 6008 / Z-2901).